The chain runs to 227 residues: Cytidylate kinase (227 aa).

Residue 10–18 (GPASSGKST) coordinates ATP.

It belongs to the cytidylate kinase family. Type 1 subfamily.

It localises to the cytoplasm. It catalyses the reaction CMP + ATP = CDP + ADP. The catalysed reaction is dCMP + ATP = dCDP + ADP. This is Cytidylate kinase from Streptococcus agalactiae serotype III (strain NEM316).